The sequence spans 395 residues: General transcription factor IIH subunit 2 (395 aa).

The region spanning 60–236 (HLYVVVDGSR…HYKELLTHHV (177 aa)) is the VWFA domain. Tyr-95 bears the Phosphotyrosine mark. The C4-type zinc finger occupies 291–308 (CPQCRAKYCELPVECKIC).

Belongs to the GTF2H2 family. In terms of assembly, component of the TFIID-containing RNA polymerase II pre-initiation complex that is composed of TBP and at least GTF2A1, GTF2A2, GTF2E1, GTF2E2, GTF2F1, GTF2H2, GTF2H3, GTF2H4, GTF2H5, GTF2B, TCEA1, ERCC2 and ERCC3. Component of the 7-subunit TFIIH core complex composed of XPB/ERCC3, XPD/ERCC2, GTF2H1, GTF2H2, GTF2H3, GTF2H4 and GTF2H5, which is active in NER. The core complex associates with the 3-subunit CDK-activating kinase (CAK) module composed of CCNH/cyclin H, CDK7 and MNAT1 to form the 10-subunit holoenzyme (holo-TFIIH) active in transcription. Interacts with XPB, XPD, GTF2H1 and GTF2H3.

It is found in the nucleus. In terms of biological role, component of the general transcription and DNA repair factor IIH (TFIIH) core complex, which is involved in general and transcription-coupled nucleotide excision repair (NER) of damaged DNA and, when complexed to CAK, in RNA transcription by RNA polymerase II. In NER, TFIIH acts by opening DNA around the lesion to allow the excision of the damaged oligonucleotide and its replacement by a new DNA fragment. In transcription, TFIIH has an essential role in transcription initiation. When the pre-initiation complex (PIC) has been established, TFIIH is required for promoter opening and promoter escape. Phosphorylation of the C-terminal tail (CTD) of the largest subunit of RNA polymerase II by the kinase module CAK controls the initiation of transcription. The N-terminus of GTF2H2 interacts with and regulates XPD whereas an intact C-terminus is required for a successful escape of RNAP II form the promoter. The sequence is that of General transcription factor IIH subunit 2 (GTF2H2) from Bos taurus (Bovine).